Here is a 1066-residue protein sequence, read N- to C-terminus: FHIP family protein GH13096 (1066 aa).

The span at 1–15 (MSWLRTSPLRQSLTR) shows a compositional bias: polar residues. Residues 1-33 (MSWLRTSPLRQSLTRNSGGNGSGGSGNSGNASA) are disordered. Over residues 18–27 (GGNGSGGSGN) the composition is skewed to gly residues. A Phosphoserine modification is found at Ser512. Disordered stretches follow at residues 647 to 688 (SFKW…NSSG), 827 to 885 (DNSP…RSDN), and 942 to 1010 (SRGV…FNSE). Positions 658–687 (NDATTTTATSDPDVEHNNSSNHNNSSINSS) are enriched in low complexity. At Ser829 the chain carries Phosphoserine. Positions 836 to 856 (HQQQQLQHTTNSTHQQQQAQQ) are enriched in low complexity. A compositionally biased stretch (polar residues) spans 950–963 (PRGNTCETSLSTTP). Low complexity predominate over residues 967 to 996 (AQATSASSTNSSIGGSTQTLSATHSSSTLH). The segment covering 1001–1010 (GPQTASFNSE) has biased composition (polar residues).

It belongs to the FHIP family.

This chain is FHIP family protein GH13096, found in Drosophila grimshawi (Hawaiian fruit fly).